We begin with the raw amino-acid sequence, 294 residues long: Transmembrane protein 178B (294 aa).

An N-terminal signal peptide occupies residues 1–23; it reads MAAGKLLLYAGLSLSLCALGMLA. Transmembrane regions (helical) follow at residues 172-192, 206-226, and 252-272; these read AGFM…GMLG, LLFL…VAGI, and MFCA…CTLA.

This sequence belongs to the TMEM178 family.

Its subcellular location is the membrane. This chain is Transmembrane protein 178B (tmem178b), found in Danio rerio (Zebrafish).